A 369-amino-acid polypeptide reads, in one-letter code: N-succinylamino acid racemase (369 aa).

Lys-163 functions as the Proton donor in the catalytic mechanism. Mg(2+) is bound by residues Asp-188, Glu-213, and Asp-238. Lys-262 functions as the Proton acceptor in the catalytic mechanism.

Belongs to the mandelate racemase/muconate lactonizing enzyme family. MenC type 2 subfamily. Homooctamer. Tetramer of dimers. The cofactor is a divalent metal cation.

It carries out the reaction (1R,6R)-6-hydroxy-2-succinyl-cyclohexa-2,4-diene-1-carboxylate = 2-succinylbenzoate + H2O. In terms of biological role, acts as a N-succinylamino acid racemase (NSAR) that catalyzes the racemization of N-succinyl-L-phenylglycine. Also converts 2-succinyl-6-hydroxy-2,4-cyclohexadiene-1-carboxylate (SHCHC) to 2-succinylbenzoate (OSB). Catalyzes both N-succinylamino acid racemization and OSB synthesis at equivalent rates. However, NSAR activity is probably the protein's biological function, because menaquinone biosynthesis genes are missing in this species. The chain is N-succinylamino acid racemase from Thermus thermophilus (strain ATCC 27634 / DSM 579 / HB8).